Reading from the N-terminus, the 313-residue chain is Malate dehydrogenase (313 aa).

NAD(+) contacts are provided by residues Gly8 to Gly13 and Asp33. Substrate contacts are provided by Arg83 and Arg89. NAD(+) contacts are provided by residues Asn96 and Ile119–Asn121. Substrate contacts are provided by Asn121 and Arg152. The active-site Proton acceptor is the His176.

Belongs to the LDH/MDH superfamily. MDH type 3 family.

The catalysed reaction is (S)-malate + NAD(+) = oxaloacetate + NADH + H(+). Functionally, catalyzes the reversible oxidation of malate to oxaloacetate. The protein is Malate dehydrogenase of Parabacteroides distasonis (strain ATCC 8503 / DSM 20701 / CIP 104284 / JCM 5825 / NCTC 11152).